We begin with the raw amino-acid sequence, 380 residues long: MKNEMLALILAGGQGTRLGKLTQSIAKPAVQFGGRYRIIDFALSNCANSGIHNVGVVTQYQPLALNNHIGNGSSWGLDGINSGVSILQPYSASEGNRWFEGTSHAIYQNIDYIDSVNPEYVLILSGDHIYKMDYDDMLQSHKDNNASLTVAVLDVPLKEASRFGIMNTDANNRIVEFEEKPAQPKSTKASMGIYIFDWQRLRNMLVAAEKSKVGMSDFGKNVIPNYLESGESVYAYEFSGYWKDVGTIESLWEANMEYISPENALDSRNRQWKIYSRNLISPPNFLGANAHVEDSLVVDGCFVDGTVKHSILSTGAQVREGAEILDSVIMSGAIIGQGAKIKRAIIGEGAIISDGVEIDGTDEVQVVGYNEVVGVATDED.

Residues G164, 179–180, and S190 contribute to the alpha-D-glucose 1-phosphate site; that span reads EK.

Belongs to the bacterial/plant glucose-1-phosphate adenylyltransferase family. Homotetramer.

It carries out the reaction alpha-D-glucose 1-phosphate + ATP + H(+) = ADP-alpha-D-glucose + diphosphate. It participates in glycan biosynthesis; glycogen biosynthesis. Functionally, involved in the biosynthesis of ADP-glucose, a building block required for the elongation reactions to produce glycogen. Catalyzes the reaction between ATP and alpha-D-glucose 1-phosphate (G1P) to produce pyrophosphate and ADP-Glc. The chain is Glucose-1-phosphate adenylyltransferase from Streptococcus pneumoniae (strain 70585).